Consider the following 125-residue polypeptide: MAITKEDILNAVAEMSVMDVCDLVKMMEDKFGVSAAAAVAVAAGPVAGPVEAAEEKTEFDVVLVDAGSNKIAAIKAVRGATGLGLKEAKDAVEGTPFTVKEAASKEEAEALKKQLEEAGAKVELK.

This sequence belongs to the bacterial ribosomal protein bL12 family. As to quaternary structure, homodimer. Part of the ribosomal stalk of the 50S ribosomal subunit. Forms a multimeric L10(L12)X complex, where L10 forms an elongated spine to which 2 to 4 L12 dimers bind in a sequential fashion. Binds GTP-bound translation factors.

In terms of biological role, forms part of the ribosomal stalk which helps the ribosome interact with GTP-bound translation factors. Is thus essential for accurate translation. This Francisella tularensis subsp. holarctica (strain FTNF002-00 / FTA) protein is Large ribosomal subunit protein bL12.